A 218-amino-acid chain; its full sequence is ATP phosphoribosyltransferase (218 aa).

Belongs to the ATP phosphoribosyltransferase family. Short subfamily. In terms of assembly, heteromultimer composed of HisG and HisZ subunits.

The protein resides in the cytoplasm. It carries out the reaction 1-(5-phospho-beta-D-ribosyl)-ATP + diphosphate = 5-phospho-alpha-D-ribose 1-diphosphate + ATP. It participates in amino-acid biosynthesis; L-histidine biosynthesis; L-histidine from 5-phospho-alpha-D-ribose 1-diphosphate: step 1/9. Catalyzes the condensation of ATP and 5-phosphoribose 1-diphosphate to form N'-(5'-phosphoribosyl)-ATP (PR-ATP). Has a crucial role in the pathway because the rate of histidine biosynthesis seems to be controlled primarily by regulation of HisG enzymatic activity. The chain is ATP phosphoribosyltransferase from Burkholderia thailandensis (strain ATCC 700388 / DSM 13276 / CCUG 48851 / CIP 106301 / E264).